An 86-amino-acid chain; its full sequence is UPF0512 protein V (86 aa).

It belongs to the UPF0512 family.

This chain is UPF0512 protein V, found in Dictyostelium discoideum (Social amoeba).